The primary structure comprises 142 residues: Photosystem II extrinsic protein U (142 aa).

A signal peptide spans 1-29 (MKGLVRLLTVFSLLLGCWGWLGTTQIAQA).

Belongs to the PsbU family. As to quaternary structure, PSII is composed of 1 copy each of membrane proteins PsbA, PsbB, PsbC, PsbD, PsbE, PsbF, PsbH, PsbI, PsbJ, PsbK, PsbL, PsbM, PsbT, PsbX, PsbY, PsbZ, Psb30/Ycf12, peripheral proteins PsbO, CyanoQ (PsbQ), PsbU, PsbV and a large number of cofactors. It forms dimeric complexes.

The protein localises to the cellular thylakoid membrane. One of the extrinsic, lumenal subunits of photosystem II (PSII). PSII is a light-driven water plastoquinone oxidoreductase, using light energy to abstract electrons from H(2)O, generating a proton gradient subsequently used for ATP formation. The extrinsic proteins stabilize the structure of photosystem II oxygen-evolving complex (OEC), the ion environment of oxygen evolution and protect the OEC against heat-induced inactivation. The chain is Photosystem II extrinsic protein U from Nostoc sp. (strain PCC 7120 / SAG 25.82 / UTEX 2576).